Reading from the N-terminus, the 469-residue chain is 3-isopropylmalate dehydratase large subunit (469 aa).

The [4Fe-4S] cluster site is built by Cys-350, Cys-410, and Cys-413.

The protein belongs to the aconitase/IPM isomerase family. LeuC type 1 subfamily. As to quaternary structure, heterodimer of LeuC and LeuD. Requires [4Fe-4S] cluster as cofactor.

The enzyme catalyses (2R,3S)-3-isopropylmalate = (2S)-2-isopropylmalate. It participates in amino-acid biosynthesis; L-leucine biosynthesis; L-leucine from 3-methyl-2-oxobutanoate: step 2/4. Functionally, catalyzes the isomerization between 2-isopropylmalate and 3-isopropylmalate, via the formation of 2-isopropylmaleate. This is 3-isopropylmalate dehydratase large subunit from Allorhizobium ampelinum (strain ATCC BAA-846 / DSM 112012 / S4) (Agrobacterium vitis (strain S4)).